A 422-amino-acid chain; its full sequence is Cystine lyase CORI3 (422 aa).

This sequence belongs to the class-I pyridoxal-phosphate-dependent aminotransferase family. Homodimer. The cofactor is pyridoxal 5'-phosphate. As to expression, expressed in cotyledons, sepals, pistils, flower buds, phloem companion cells and vascular tissues of petiole, leaf, filament and fruit.

The catalysed reaction is L-cystine + H2O = S-sulfanyl-L-cysteine + pyruvate + NH4(+). Functionally, possesses cystine lyase activity in vitro. Does not possess tyrosine aminotransferase, alanine aminotransferase, aspartate aminotransferase and tryptophan aminotransferase activities. The chain is Cystine lyase CORI3 from Arabidopsis thaliana (Mouse-ear cress).